Consider the following 470-residue polypeptide: MSTSTSEPGAIAGLPLGAEVRTDGDATGLSVAIVGGGIVGIALALGLVERGVRVSVYERAQELPEIGVGFAFNGAARKSMARLSPLVMAAVERVANENEQAYDNYWDGYTSTAEDDESSTASKRGKLLFRMPNSNMAWWSCLRSQFLNEMLQALPPGTVTFGKELDSYDDPFDTSDPVRLRFTDGTTAAANVLIGSDGLRSRVRQQLFATSHPEVCNPTYTHKTCYRAVIPMAAAESAMGLSKPHNHCMHTGPRAHVLSYPIAQHKLVNVVLFVTHDEPWVDGTGDEAISVPRMTRPGDKKVLQNRLADWRPEVRNLVAQLPDAPTAWGIFDTAEHPVPFYAAGRVGLVGDAAHASSPHHGAGAGFGVEDALALAVALGMATEKKQSVAAALQAFNDVRYDRTQWLIRSSKETGDIYEWKHFGVGGDPVKIRAELEGRQKTIWDYDVDAMAEEVKTRYEARVTSETTAHQ.

The helical transmembrane segment at 28–48 threads the bilayer; it reads GLSVAIVGGGIVGIALALGLV. Residues E58, A71, and R143 each contribute to the FAD site. Residues R227 and Y260 contribute to the active site. FAD contacts are provided by D351 and A364.

The protein belongs to the paxM FAD-dependent monooxygenase family. FAD is required as a cofactor.

The protein localises to the membrane. The protein operates within mycotoxin biosynthesis. FAD-dependent monooxygenase; part of the satratoxin SC1 cluster involved in the biosynthesis of satratoxins, trichothecene mycotoxins that are associated with human food poisonings. Satratoxins are suggested to be made by products of multiple gene clusters (SC1, SC2 and SC3) that encode 21 proteins in all, including polyketide synthases, acetyltransferases, and other enzymes expected to modify the trichothecene skeleton. SC1 encodes 10 proteins, SAT1 to SAT10. The largest are SAT8, which encodes a putative polyketide synthase (PKS) with a conventional non-reducing architecture, and SAT10, a putative protein containing four ankyrin repeats and thus may be involved in protein scaffolding. The putative short-chain reductase SAT3 may assist the PKS in some capacity. SAT6 contains a secretory lipase domain and acts probably as a trichothecene esterase. SAT5 encodes a putative acetyltransferase, and so, with SAT6, may affect endogenous protection from toxicity. The probable transcription factor SAT9 may regulate the expression of the SC1 cluster. SC2 encodes proteins SAT11 to SAT16, the largest of which encodes the putative reducing PKS SAT13. SAT11 is a cytochrome P450 monooxygenase, while SAT14 and SAT16 are probable acetyltransferases. The SC2 cluster may be regulated by the transcription factor SAT15. SC3 is a small cluster that encodes 5 proteins, SAT17 to SAT21. SAT21 is a putative MFS-type transporter which may have a role in exporting secondary metabolites. The four other proteins putatively encoded in SC3 include the taurine hydroxylase-like protein SAT17, the O-methyltransferase SAT18, the acetyltransferase SAT19, and the Cys6-type zinc finger SAT20, the latter being probably involved in regulation of SC3 expression. The chain is FAD-dependent monooxygenase SAT7 from Stachybotrys chartarum (strain CBS 109288 / IBT 7711) (Toxic black mold).